The sequence spans 333 residues: D-fructose 1,6-bisphosphatase class 2/sedoheptulose 1,7-bisphosphatase (333 aa).

The Mn(2+) site is built by aspartate 33, glutamate 57, aspartate 85, and glutamate 88. Substrate-binding positions include 88–90, tyrosine 119, 164–166, and 186–188; these read EGT, RAR, and DGD. A Mn(2+)-binding site is contributed by glutamate 213.

This sequence belongs to the FBPase class 2 family. Homotetramer. Requires Mn(2+) as cofactor.

The catalysed reaction is beta-D-fructose 1,6-bisphosphate + H2O = beta-D-fructose 6-phosphate + phosphate. The enzyme catalyses D-sedoheptulose 1,7-bisphosphate + H2O = D-sedoheptulose 7-phosphate + phosphate. Its pathway is carbohydrate biosynthesis; Calvin cycle. Its function is as follows. Catalyzes the hydrolysis of fructose 1,6-bisphosphate (Fru 1,6-P2) and sedoheptulose 1,7-bisphosphate (Sed 1,7-P2) to fructose 6-phosphate and sedoheptulose 7-phosphate, respectively. The chain is D-fructose 1,6-bisphosphatase class 2/sedoheptulose 1,7-bisphosphatase from Prochlorococcus marinus (strain MIT 9515).